Consider the following 678-residue polypeptide: RNA helicase NPH-II (678 aa).

In terms of domain architecture, Helicase ATP-binding spans 175 to 351 (FESWIHHVPV…EFFTESVFVH (177 aa)). Residue 188-195 (GDTGVGKT) coordinates ATP. The DEXH box signature appears at 300–303 (DEVH). The 176-residue stretch at 371-546 (SLNKFMYIEE…VFDLQLPEDL (176 aa)) folds into the Helicase C-terminal domain.

Belongs to the DEAD box helicase family. DEAH subfamily. As to quaternary structure, monomer.

It is found in the virion. The enzyme catalyses ATP + H2O = ADP + phosphate + H(+). NTP-dependent helicase that catalyzes unidirectional unwinding of 3'tailed duplex RNAs and plays an important role during transcription of early mRNAs, presumably by preventing R-loop formation behind the elongating RNA polymerase. Might also play a role in the export of newly synthesized mRNA chains out of the core into the cytoplasm. Required for replication and propagation of viral particles. This is RNA helicase NPH-II (OPG084) from Oryctolagus cuniculus (Rabbit).